Reading from the N-terminus, the 567-residue chain is Probable diguanylate cyclase DgcQ (567 aa).

The next 2 helical transmembrane spans lie at 20-40 (FGPGHVVNTCFLIVMLFSTLL) and 357-377 (IALTLLWGLFTAMLLISWGVI). The 136-residue stretch at 425–560 (QPFSVIQLDL…GRNRICASDA (136 aa)) folds into the GGDEF domain. A Mg(2+)-binding site is contributed by aspartate 433. Substrate-binding residues include asparagine 441, histidine 446, and aspartate 450. Glutamate 476 lines the Mg(2+) pocket. Catalysis depends on glutamate 476, which acts as the Proton acceptor.

Homodimer. The cofactor is Mg(2+).

The protein localises to the cell inner membrane. The enzyme catalyses 2 GTP = 3',3'-c-di-GMP + 2 diphosphate. Its pathway is glycan metabolism; bacterial cellulose biosynthesis. It participates in purine metabolism; 3',5'-cyclic di-GMP biosynthesis. Its function is as follows. Catalyzes the synthesis of cyclic-di-GMP (c-di-GMP) via the condensation of 2 GTP molecules. Cyclic-di-GMP is a second messenger which controls cell surface-associated traits in bacteria. Involved in the regulation of cellulose production. This is Probable diguanylate cyclase DgcQ from Salmonella typhi.